We begin with the raw amino-acid sequence, 760 residues long: Xaa-Pro dipeptidyl-peptidase (760 aa).

Residues Ser-349, Asp-469, and His-499 each act as charge relay system in the active site.

This sequence belongs to the peptidase S15 family. As to quaternary structure, homodimer.

The protein resides in the cytoplasm. It carries out the reaction Hydrolyzes Xaa-Pro-|- bonds to release unblocked, N-terminal dipeptides from substrates including Ala-Pro-|-p-nitroanilide and (sequentially) Tyr-Pro-|-Phe-Pro-|-Gly-Pro-|-Ile.. In terms of biological role, removes N-terminal dipeptides sequentially from polypeptides having unsubstituted N-termini provided that the penultimate residue is proline. The chain is Xaa-Pro dipeptidyl-peptidase from Streptococcus pyogenes serotype M49 (strain NZ131).